A 186-amino-acid polypeptide reads, in one-letter code: Ribosome-recycling factor (186 aa).

The tract at residues 135–164 is disordered; that stretch reads DGMDDLKKAEKDGEIGQDESRAQSERVQKM.

The protein belongs to the RRF family.

Its subcellular location is the cytoplasm. Its function is as follows. Responsible for the release of ribosomes from messenger RNA at the termination of protein biosynthesis. May increase the efficiency of translation by recycling ribosomes from one round of translation to another. The protein is Ribosome-recycling factor of Rhizobium meliloti (strain 1021) (Ensifer meliloti).